Here is a 674-residue protein sequence, read N- to C-terminus: DNA ligase (674 aa).

Residues 42 to 46, 91 to 92, and E121 contribute to the NAD(+) site; these read DNVYD and SM. K123 functions as the N6-AMP-lysine intermediate in the catalytic mechanism. Residues R144, E178, K294, and K318 each coordinate NAD(+). Residues C412, C415, C430, and C435 each contribute to the Zn(2+) site. The region spanning 596 to 674 is the BRCT domain; it reads VKDSFVAGKT…ETELLANLKD (79 aa).

It belongs to the NAD-dependent DNA ligase family. LigA subfamily. Mg(2+) serves as cofactor. It depends on Mn(2+) as a cofactor.

It catalyses the reaction NAD(+) + (deoxyribonucleotide)n-3'-hydroxyl + 5'-phospho-(deoxyribonucleotide)m = (deoxyribonucleotide)n+m + AMP + beta-nicotinamide D-nucleotide.. DNA ligase that catalyzes the formation of phosphodiester linkages between 5'-phosphoryl and 3'-hydroxyl groups in double-stranded DNA using NAD as a coenzyme and as the energy source for the reaction. It is essential for DNA replication and repair of damaged DNA. The protein is DNA ligase of Lacticaseibacillus paracasei (strain ATCC 334 / BCRC 17002 / CCUG 31169 / CIP 107868 / KCTC 3260 / NRRL B-441) (Lactobacillus paracasei).